The primary structure comprises 342 residues: L-threonine 3-dehydrogenase (342 aa).

Cys38 serves as a coordination point for Zn(2+). Active-site charge relay system residues include Thr40 and His43. Zn(2+) is bound by residues His63, Glu64, Cys93, Cys96, Cys99, and Cys107. NAD(+) contacts are provided by residues Ile175, Asp195, Arg200, 262-264, and 286-287; these read LGI and IY.

The protein belongs to the zinc-containing alcohol dehydrogenase family. Homotetramer. Requires Zn(2+) as cofactor.

It is found in the cytoplasm. It catalyses the reaction L-threonine + NAD(+) = (2S)-2-amino-3-oxobutanoate + NADH + H(+). It participates in amino-acid degradation; L-threonine degradation via oxydo-reductase pathway; glycine from L-threonine: step 1/2. Functionally, catalyzes the NAD(+)-dependent oxidation of L-threonine to 2-amino-3-ketobutyrate. In Burkholderia cenocepacia (strain HI2424), this protein is L-threonine 3-dehydrogenase.